Consider the following 437-residue polypeptide: Phosphoglucosamine mutase (437 aa).

Ser-101 acts as the Phosphoserine intermediate in catalysis. Mg(2+) contacts are provided by Ser-101, Asp-234, Asp-236, and Asp-238. Ser-101 carries the phosphoserine modification.

This sequence belongs to the phosphohexose mutase family. Mg(2+) serves as cofactor. Post-translationally, activated by phosphorylation.

It catalyses the reaction alpha-D-glucosamine 1-phosphate = D-glucosamine 6-phosphate. Catalyzes the conversion of glucosamine-6-phosphate to glucosamine-1-phosphate. This Thermus thermophilus (strain ATCC 27634 / DSM 579 / HB8) protein is Phosphoglucosamine mutase.